The following is a 132-amino-acid chain: Large ribosomal subunit protein bL17 (132 aa).

This sequence belongs to the bacterial ribosomal protein bL17 family. Part of the 50S ribosomal subunit. Contacts protein L32.

This chain is Large ribosomal subunit protein bL17, found in Saccharophagus degradans (strain 2-40 / ATCC 43961 / DSM 17024).